The following is a 141-amino-acid chain: Large ribosomal subunit protein uL11 (141 aa).

This sequence belongs to the universal ribosomal protein uL11 family. Part of the ribosomal stalk of the 50S ribosomal subunit. Interacts with L10 and the large rRNA to form the base of the stalk. L10 forms an elongated spine to which L12 dimers bind in a sequential fashion forming a multimeric L10(L12)X complex. In terms of processing, one or more lysine residues are methylated.

Forms part of the ribosomal stalk which helps the ribosome interact with GTP-bound translation factors. This Nostoc punctiforme (strain ATCC 29133 / PCC 73102) protein is Large ribosomal subunit protein uL11.